The chain runs to 68 residues: Molybdenum-pterin-binding protein 2 (68 aa).

The Mop domain occupies 2-68 (SISARNQLKG…VKSTDVMILA (67 aa)).

Functionally, binds one mole of molybdenum per mole of protein and contains a pterin. This Clostridium pasteurianum protein is Molybdenum-pterin-binding protein 2 (mopII).